The sequence spans 356 residues: Inactive ubiquitin thioesterase OTULINL (356 aa).

Residues 1–22 (MAATRSPTRARERERSGAPAAG) are disordered. The required for membrane binding stretch occupies residues 1-83 (MAATRSPTRA…KWWIGYLQRK (83 aa)). The OTU domain maps to 128–356 (KCVRQVRRDN…NDRHYHIPVF (229 aa)).

This sequence belongs to the peptidase C65 family. Otulin subfamily. In terms of assembly, does not bind ubiquitin or ubiquitin-like proteins.

It localises to the cytoplasm. It is found in the endoplasmic reticulum membrane. The protein resides in the nucleus envelope. Functionally, lacks deubiquitinase activity. The chain is Inactive ubiquitin thioesterase OTULINL from Homo sapiens (Human).